A 350-amino-acid chain; its full sequence is Secreted effector protein PipB2 (350 aa).

Pentapeptide repeat domains lie at 162–201, 202–241, 247–286, and 287–326; these read ANLT…NLSG, TSLG…SLLG, CNCS…IMED, and AVLT…TLTH.

In terms of assembly, interacts with the host kinesin light chain (KLC), a subunit of the kinesin-1 motor complex.

It localises to the secreted. Its subcellular location is the host membrane. Effector proteins function to alter host cell physiology and promote bacterial survival in host tissues. Involved in the reorganization of late endosome/lysosome (LE/Lys) compartments in mammalian cells. Necessary and sufficient to link kinesin-1 onto the Salmonella-containing vacuole (SCV) membrane. Required for centrifugal extension of lysosomal glycoprotein-rich membrane tubules, known as Salmonella-induced filaments (Sifs), away from the SCV and toward the cell periphery. Required for virulence, but not for intracellular survival and replication in phagocytic cells. The sequence is that of Secreted effector protein PipB2 (pipB2) from Salmonella choleraesuis (strain SC-B67).